A 325-amino-acid polypeptide reads, in one-letter code: UDP-N-acetylglucosamine transporter ROCK1 (325 aa).

At 1-13 (MATANGAKSPSSM) the chain is on the cytoplasmic side. A helical transmembrane segment spans residues 14 to 34 (GPKVLFYSILLTLQYGAQPLI). Residues 35 to 42 (SKRCIRKD) lie on the Lumenal side of the membrane. The helical transmembrane segment at 43–63 (VIVTSSVLTCEIVKVICALIL) threads the bilayer. Residues 64-109 (MARNGSLKGLAKEWTLMGSLTASGLPAAIYALQNSLLQISYRSLDS) lie on the Cytoplasmic side of the membrane. The helical transmembrane segment at 110–130 (LTFSILNQTKIFFTAFFTFII) threads the bilayer. At 131 to 135 (LRQKQ) the chain is on the lumenal side. Residues 136–156 (SILQIGALCLLIMAAVLLSVG) traverse the membrane as a helical segment. At 157-171 (EGSNKDSSGINADQK) the chain is on the cytoplasmic side. A helical transmembrane segment spans residues 172-192 (LFYGIIPVLAASVLSGLASSL). The Lumenal segment spans residues 193–203 (CQWASQVKKHS). A helical membrane pass occupies residues 204–224 (SYLMTVEMSIVGSLCLLVSTL). The Cytoplasmic segment spans residues 225 to 241 (KSPDGEAIKKYGFFHGW). The helical transmembrane segment at 242 to 262 (TALTLVPVISNALGGILVGLV) threads the bilayer. Topologically, residues 263 to 270 (TSHAGGVR) are lumenal. A helical transmembrane segment spans residues 271–291 (KGFVIVSALLVTALLQFAFEG). Residues 292–325 (KPPSSYCLVALPLVMSSISMYQKYPYIDKKKKKV) are Cytoplasmic-facing.

Belongs to the nucleotide-sugar transporter family. CMP-Sialate:CMP antiporter (TC 2.A.7.12) subfamily. Expressed in roots, cotyledons, leaves, stems, flowers and siliques.

The protein localises to the endoplasmic reticulum membrane. In terms of biological role, mediates the transport of UDP-linked acetylated hexosamines across the endoplasmic reticulum (ER) membrane. Facilitates UDP-N-acetylglucosamine (UDP-GlcNAc) and UDP-N-acetylgalactosamine (UDP-GalNAc) transport. Regulates the cytokinin signal in meristematic cells through modulating activity of cytokinin oxidases/dehydrogenases. Part of the ER quality control system, which determines the fate of aberrant proteins in the secretory pathway. The protein is UDP-N-acetylglucosamine transporter ROCK1 of Arabidopsis thaliana (Mouse-ear cress).